A 106-amino-acid polypeptide reads, in one-letter code: Insulin-like peptide 03 (106 aa).

An N-terminal signal peptide occupies residues 1 to 18 (MLFYFGLAVIFLIDSSQT). The propeptide occupies 19–34 (QTLYKVNEVGGSQVDR). 3 disulfide bridges follow: C37-C93, C49-C106, and C92-C97. Positions 52–82 (KKRQNIPRKYGRDPNNILEKEEFAKRFLRVR) are cleaved as a propeptide — c peptide.

Belongs to the insulin family.

Its subcellular location is the secreted. Functionally, insulin decreases blood glucose concentration. May have evolved to activate insulin receptors (INSR) in vertebrates. Molecular docking studies reveals unique interaction with the human insulin receptor. In vivo, insulin-like peptide injection reduces blood glucose levels in two models of zebrafish diabetes (streptozotocin- and glucose-induced). Also shorter swimming distance of zebrafish larvae, an effect which is not observed with human insulin. The protein is Insulin-like peptide 03 of Exaiptasia diaphana (Tropical sea anemone).